Reading from the N-terminus, the 261-residue chain is Thiazole synthase (261 aa).

The active-site Schiff-base intermediate with DXP is K95. 1-deoxy-D-xylulose 5-phosphate-binding positions include G156, A182–G183, and N204–T205.

The protein belongs to the ThiG family. In terms of assembly, homotetramer. Forms heterodimers with either ThiH or ThiS.

It is found in the cytoplasm. It carries out the reaction [ThiS sulfur-carrier protein]-C-terminal-Gly-aminoethanethioate + 2-iminoacetate + 1-deoxy-D-xylulose 5-phosphate = [ThiS sulfur-carrier protein]-C-terminal Gly-Gly + 2-[(2R,5Z)-2-carboxy-4-methylthiazol-5(2H)-ylidene]ethyl phosphate + 2 H2O + H(+). It functions in the pathway cofactor biosynthesis; thiamine diphosphate biosynthesis. Its function is as follows. Catalyzes the rearrangement of 1-deoxy-D-xylulose 5-phosphate (DXP) to produce the thiazole phosphate moiety of thiamine. Sulfur is provided by the thiocarboxylate moiety of the carrier protein ThiS. In vitro, sulfur can be provided by H(2)S. The polypeptide is Thiazole synthase (Pectobacterium carotovorum subsp. carotovorum (strain PC1)).